Here is a 571-residue protein sequence, read N- to C-terminus: Urease subunit alpha (571 aa).

In terms of domain architecture, Urease spans 129 to 571 (GGIDTHIHFI…LPMAQRYFLF (443 aa)). Ni(2+) is bound by residues H134, H136, and K217. N6-carboxylysine is present on K217. H219 provides a ligand contact to substrate. Ni(2+) contacts are provided by H246 and H272. Catalysis depends on H320, which acts as the Proton donor. D360 contributes to the Ni(2+) binding site.

This sequence belongs to the metallo-dependent hydrolases superfamily. Urease alpha subunit family. In terms of assembly, heterotrimer of UreA (gamma), UreB (beta) and UreC (alpha) subunits. Three heterotrimers associate to form the active enzyme. The cofactor is Ni cation. In terms of processing, carboxylation allows a single lysine to coordinate two nickel ions.

It is found in the cytoplasm. It carries out the reaction urea + 2 H2O + H(+) = hydrogencarbonate + 2 NH4(+). It participates in nitrogen metabolism; urea degradation; CO(2) and NH(3) from urea (urease route): step 1/1. The polypeptide is Urease subunit alpha (Cupriavidus pinatubonensis (strain JMP 134 / LMG 1197) (Cupriavidus necator (strain JMP 134))).